The sequence spans 293 residues: Pyridoxal 5'-phosphate synthase subunit PdxS (293 aa).

Aspartate 23 contributes to the D-ribose 5-phosphate binding site. The Schiff-base intermediate with D-ribose 5-phosphate role is filled by lysine 80. D-ribose 5-phosphate is bound at residue glycine 152. Arginine 164 provides a ligand contact to D-glyceraldehyde 3-phosphate. D-ribose 5-phosphate-binding positions include glycine 213 and 234-235; that span reads GS.

This sequence belongs to the PdxS/SNZ family. In terms of assembly, in the presence of PdxT, forms a dodecamer of heterodimers.

The enzyme catalyses aldehydo-D-ribose 5-phosphate + D-glyceraldehyde 3-phosphate + L-glutamine = pyridoxal 5'-phosphate + L-glutamate + phosphate + 3 H2O + H(+). Its pathway is cofactor biosynthesis; pyridoxal 5'-phosphate biosynthesis. Catalyzes the formation of pyridoxal 5'-phosphate from ribose 5-phosphate (RBP), glyceraldehyde 3-phosphate (G3P) and ammonia. The ammonia is provided by the PdxT subunit. Can also use ribulose 5-phosphate and dihydroxyacetone phosphate as substrates, resulting from enzyme-catalyzed isomerization of RBP and G3P, respectively. This is Pyridoxal 5'-phosphate synthase subunit PdxS from Thermus thermophilus (strain ATCC BAA-163 / DSM 7039 / HB27).